The following is a 347-amino-acid chain: Gentisate 1,2 dioxygenase 1 (347 aa).

The region spanning 96–163 (LQLILPGEVA…DSDKPMIWMD (68 aa)) is the Cupin type-2 domain.

The protein belongs to the gentisate 1,2-dioxygenase family. As to quaternary structure, homotetramer. Fe(2+) is required as a cofactor.

It carries out the reaction 2,5-dihydroxybenzoate + O2 = 3-maleylpyruvate + H(+). With respect to regulation, completely inhibited by the presence of 5 mM Cu(2+). Partially inhibited with 5 mM Mn(2+), Zn(2+) or EDTA. Functionally, involved in the degradation of gentisate. Catalyzes the conversion of gentisate (2,5-dihydroxybenzoate) to maleylpyruvate. Exhibits broad substrate specificities towards alkyl and halogenated gentisates. This chain is Gentisate 1,2 dioxygenase 1, found in Aquipseudomonas alcaligenes (Pseudomonas alcaligenes).